The primary structure comprises 421 residues: Ribosomal RNA large subunit methyltransferase G (421 aa).

Residues 389–421 are disordered; that stretch reads EPELEQESDLNSKLDANTEVPHPQSALYGKPKA.

Belongs to the methyltransferase superfamily. RlmG family.

The protein resides in the cytoplasm. The enzyme catalyses guanosine(1835) in 23S rRNA + S-adenosyl-L-methionine = N(2)-methylguanosine(1835) in 23S rRNA + S-adenosyl-L-homocysteine + H(+). In terms of biological role, specifically methylates the guanine in position 1835 (m2G1835) of 23S rRNA. This is Ribosomal RNA large subunit methyltransferase G from Shewanella halifaxensis (strain HAW-EB4).